The chain runs to 513 residues: E3 ubiquitin-protein ligase XBAT33 (513 aa).

5 ANK repeats span residues 44 to 73 (GLNSPLHFAAAKGHNEIVGLLLENGADVNS), 77 to 106 (CGQTALMQACRYGHWEVVQTLLLFRCNVTR), 111 to 140 (AGRTALHFAAVNGHARCIRLVLADFLPSDK), 171 to 200 (GGITALHMAALNGLFDCVQLLLDLEANVSA), and 214 to 244 (AGSTPLHYAACGGNLKCCQILLARGARKMTL). An RING-type zinc finger spans residues 312 to 362 (CAVCLERTCTVAAEGCEHQLCVRCALYLCSSSNVPSVTVGPPGSIPCPLCR). Disordered stretches follow at residues 397-417 (DTTDQSSPTCPPTEQRSSKTR) and 455-483 (HGTERHSEEHVESSPSRTTTEQEKIEEGQ). 2 stretches are compositionally biased toward basic and acidic residues: residues 455–466 (HGTERHSEEHVE) and 474–483 (TEQEKIEEGQ).

It carries out the reaction S-ubiquitinyl-[E2 ubiquitin-conjugating enzyme]-L-cysteine + [acceptor protein]-L-lysine = [E2 ubiquitin-conjugating enzyme]-L-cysteine + N(6)-ubiquitinyl-[acceptor protein]-L-lysine.. It participates in protein modification; protein ubiquitination. Possesses E3 ubiquitin-protein ligase activity when associated with the E2 enzyme UBC8 in vitro. This Arabidopsis thaliana (Mouse-ear cress) protein is E3 ubiquitin-protein ligase XBAT33 (XBAT33).